A 158-amino-acid polypeptide reads, in one-letter code: Protein SREK1IP1 (158 aa).

Disordered stretches follow at residues 1 to 20 (MAAP…RCGY) and 45 to 158 (SSTS…SDTD). The CCHC-type zinc finger occupies 13 to 30 (AGCKRCGYPGHLTFECRN). Over residues 59-79 (ALSKEKIFGSHSKGSQEDSRK) the composition is skewed to basic and acidic residues. Composition is skewed to basic residues over residues 80–98 (EKHK…KKRS) and 111–140 (KKKK…KQKK). The segment covering 145-158 (SSSSDSSSESSDTD) has biased composition (low complexity).

In terms of biological role, possible splicing regulator involved in the control of cellular survival. The protein is Protein SREK1IP1 (srek1ip1) of Danio rerio (Zebrafish).